A 526-amino-acid polypeptide reads, in one-letter code: Probable feruloyl esterase B-2 (526 aa).

The N-terminal stretch at 1–18 (MTKLSLLPLLTLASAVLA) is a signal peptide. Intrachain disulfides connect C27-C74 and C62-C113. N52 carries N-linked (GlcNAc...) asparagine glycosylation. N137 is a glycosylation site (N-linked (GlcNAc...) asparagine). 4 disulfides stabilise this stretch: C186–C441, C255–C272, C281–C291, and C503–C525. Residue S187 is the Acyl-ester intermediate of the active site. N-linked (GlcNAc...) asparagine glycosylation is present at N233. Positions 256, 259, 261, 263, and 265 each coordinate Ca(2+). N-linked (GlcNAc...) asparagine glycosylation occurs at N311. Active-site charge relay system residues include D400 and H440. An N-linked (GlcNAc...) asparagine glycan is attached at N516.

This sequence belongs to the tannase family.

The protein localises to the secreted. The catalysed reaction is feruloyl-polysaccharide + H2O = ferulate + polysaccharide.. Its function is as follows. Involved in degradation of plant cell walls. Hydrolyzes the feruloyl-arabinose ester bond in arabinoxylans as well as the feruloyl-galactose and feruloyl-arabinose ester bonds in pectin. The sequence is that of Probable feruloyl esterase B-2 (faeB-2) from Aspergillus fumigatus (strain CBS 144.89 / FGSC A1163 / CEA10) (Neosartorya fumigata).